Reading from the N-terminus, the 91-residue chain is Acylphosphatase (91 aa).

Positions 5–91 (RAHVFVSGRV…EGVDGFEVRW (87 aa)) constitute an Acylphosphatase-like domain. Active-site residues include arginine 20 and asparagine 38.

It belongs to the acylphosphatase family.

It catalyses the reaction an acyl phosphate + H2O = a carboxylate + phosphate + H(+). In Haloarcula marismortui (strain ATCC 43049 / DSM 3752 / JCM 8966 / VKM B-1809) (Halobacterium marismortui), this protein is Acylphosphatase (acyP).